The primary structure comprises 507 residues: Probable cytosol aminopeptidase (507 aa).

The Mn(2+) site is built by Lys275 and Asp280. Lys287 is an active-site residue. Mn(2+)-binding residues include Asp298, Asp357, and Glu359. Arg361 is a catalytic residue.

The protein belongs to the peptidase M17 family. The cofactor is Mn(2+).

It is found in the cytoplasm. It catalyses the reaction Release of an N-terminal amino acid, Xaa-|-Yaa-, in which Xaa is preferably Leu, but may be other amino acids including Pro although not Arg or Lys, and Yaa may be Pro. Amino acid amides and methyl esters are also readily hydrolyzed, but rates on arylamides are exceedingly low.. The catalysed reaction is Release of an N-terminal amino acid, preferentially leucine, but not glutamic or aspartic acids.. In terms of biological role, presumably involved in the processing and regular turnover of intracellular proteins. Catalyzes the removal of unsubstituted N-terminal amino acids from various peptides. In Acidobacterium capsulatum (strain ATCC 51196 / DSM 11244 / BCRC 80197 / JCM 7670 / NBRC 15755 / NCIMB 13165 / 161), this protein is Probable cytosol aminopeptidase.